A 496-amino-acid polypeptide reads, in one-letter code: Probable cytosol aminopeptidase (496 aa).

2 residues coordinate Mn(2+): K262 and D267. The active site involves K274. Positions 285, 344, and 346 each coordinate Mn(2+). R348 is an active-site residue.

It belongs to the peptidase M17 family. The cofactor is Mn(2+).

The protein resides in the cytoplasm. The enzyme catalyses Release of an N-terminal amino acid, Xaa-|-Yaa-, in which Xaa is preferably Leu, but may be other amino acids including Pro although not Arg or Lys, and Yaa may be Pro. Amino acid amides and methyl esters are also readily hydrolyzed, but rates on arylamides are exceedingly low.. It carries out the reaction Release of an N-terminal amino acid, preferentially leucine, but not glutamic or aspartic acids.. Presumably involved in the processing and regular turnover of intracellular proteins. Catalyzes the removal of unsubstituted N-terminal amino acids from various peptides. The sequence is that of Probable cytosol aminopeptidase from Rhizobium leguminosarum bv. trifolii (strain WSM2304).